We begin with the raw amino-acid sequence, 381 residues long: Chorismate synthase (381 aa).

Arg39 and Arg45 together coordinate NADP(+). Residues 127–129 (RAS), 248–249 (QS), Gly293, 308–312 (KPIPT), and Arg334 contribute to the FMN site.

It belongs to the chorismate synthase family. Homotetramer. The cofactor is FMNH2.

It carries out the reaction 5-O-(1-carboxyvinyl)-3-phosphoshikimate = chorismate + phosphate. It participates in metabolic intermediate biosynthesis; chorismate biosynthesis; chorismate from D-erythrose 4-phosphate and phosphoenolpyruvate: step 7/7. Functionally, catalyzes the anti-1,4-elimination of the C-3 phosphate and the C-6 proR hydrogen from 5-enolpyruvylshikimate-3-phosphate (EPSP) to yield chorismate, which is the branch point compound that serves as the starting substrate for the three terminal pathways of aromatic amino acid biosynthesis. This reaction introduces a second double bond into the aromatic ring system. The sequence is that of Chorismate synthase from Caldicellulosiruptor saccharolyticus (strain ATCC 43494 / DSM 8903 / Tp8T 6331).